Here is a 164-residue protein sequence, read N- to C-terminus: NADH-quinone oxidoreductase subunit I (164 aa).

2 4Fe-4S ferredoxin-type domains span residues 55 to 85 (LRRY…IDAE) and 95 to 124 (TRYD…EGPN). Positions 65, 68, 71, 75, 104, 107, 110, and 114 each coordinate [4Fe-4S] cluster.

The protein belongs to the complex I 23 kDa subunit family. NDH-1 is composed of 14 different subunits. Subunits NuoA, H, J, K, L, M, N constitute the membrane sector of the complex. [4Fe-4S] cluster serves as cofactor.

The protein localises to the cell inner membrane. It carries out the reaction a quinone + NADH + 5 H(+)(in) = a quinol + NAD(+) + 4 H(+)(out). NDH-1 shuttles electrons from NADH, via FMN and iron-sulfur (Fe-S) centers, to quinones in the respiratory chain. The immediate electron acceptor for the enzyme in this species is believed to be ubiquinone. Couples the redox reaction to proton translocation (for every two electrons transferred, four hydrogen ions are translocated across the cytoplasmic membrane), and thus conserves the redox energy in a proton gradient. This Roseobacter denitrificans (strain ATCC 33942 / OCh 114) (Erythrobacter sp. (strain OCh 114)) protein is NADH-quinone oxidoreductase subunit I.